A 142-amino-acid polypeptide reads, in one-letter code: Large ribosomal subunit protein uL11 (142 aa).

This sequence belongs to the universal ribosomal protein uL11 family. Part of the ribosomal stalk of the 50S ribosomal subunit. Interacts with L10 and the large rRNA to form the base of the stalk. L10 forms an elongated spine to which L12 dimers bind in a sequential fashion forming a multimeric L10(L12)X complex. Post-translationally, one or more lysine residues are methylated.

Its function is as follows. Forms part of the ribosomal stalk which helps the ribosome interact with GTP-bound translation factors. In Vibrio vulnificus (strain YJ016), this protein is Large ribosomal subunit protein uL11.